A 222-amino-acid chain; its full sequence is uncharacterized protein (222 aa).

The next 4 membrane-spanning stretches (helical) occupy residues 23-43 (FFAAAMLPATLVIIFVETGLL), 67-87 (IWVLSPSVAVVAVLGDQIGYL), 157-177 (IVGGILWGGGVTVAGYFLGNV), and 187-207 (IILGILFVSLLPALIAAWHGY).

This sequence belongs to the DedA family.

Its subcellular location is the cell membrane. This is an uncharacterized protein from Mycobacterium leprae (strain TN).